The primary structure comprises 828 residues: Protein TAPT1 homolog (828 aa).

Composition is skewed to low complexity over residues 67-83 (NNNNNNNSNNVSSGNHI), 212-233 (QQTQPQPQPQTQTTQQPSSQQP), and 302-321 (SNNNDNNDNNNNNNSKNNNN). Disordered stretches follow at residues 67–92 (NNNNNNNSNNVSSGNHITNSNSNSSG), 212–236 (QQTQPQPQPQTQTTQQPSSQQPFSY), and 297–346 (QTTP…TSSI). The next 5 helical transmembrane spans lie at 428 to 448 (ISFGFLVCFDSFLFLFTFLPI), 472 to 492 (QIFDLFRGFIWVTCFVFLNFI), 562 to 582 (ILGPFTHLLVATGYVCLHSLV), 722 to 742 (SSWGVNNIIGFVPFPLASIVV), and 754 to 774 (IFGIFLMVQIYICLVLLKIFI). The span at 797–822 (LSSSSSSSSSNSLNTTSTTSTSTSTT) shows a compositional bias: low complexity. The interval 797–828 (LSSSSSSSSSNSLNTTSTTSTSTSTTNDKKNN) is disordered.

Belongs to the TAPT1 family.

Its subcellular location is the membrane. The polypeptide is Protein TAPT1 homolog (Dictyostelium discoideum (Social amoeba)).